Here is a 229-residue protein sequence, read N- to C-terminus: Rab-like protein 2A (229 aa).

Residues 28–35 (GDSAVGKS), 76–80 (DTAGQ), and 133–136 (NKID) each bind GTP. The tract at residues 200–229 (NLEQEEEDVPDQEQSGSIETPSEEVASPHS) is disordered.

This sequence belongs to the small GTPase superfamily. Rab family. Interacts with IFT27, IFT81, IFT172, ATP6V1E1, HK1, LDHC, MAPRE1 and HSPA2.

Plays an essential role in male fertility, sperm intra-flagellar transport, and tail assembly. Binds, in a GTP-regulated manner, to a specific set of effector proteins including key proteins involved in cilia development and function and delivers them into the growing sperm tail. This chain is Rab-like protein 2A (RABL2A), found in Pongo abelii (Sumatran orangutan).